The chain runs to 278 residues: MHELLLFASVPAHQHHELLQQLAGLTAMQPQHRFERRLIFKAYRKPGLVNVRVGASQDVQGAEMQRLNKMLNGGMFYTQVVGPVAAADFGAPAPTVSVGDQDAQMSGMGVGVSAGVDEKPSTRPHRYDYDDQPWKLEFRDIPEAGTRSAVTARLMASASLPRGDIMVPMNAWGYNFVTEYAVEGDIFILHDIVIFLHRVLHYPTESQEPRRQLPALPEMTPLERSGSYVLQAAITVQDGASQETMKIASQHLFGLREQLKSAVRLEMADRLSLDTRAK.

It belongs to the Mediator complex subunit 18 family. In terms of assembly, component of the Mediator complex.

It is found in the nucleus. Functionally, component of the Mediator complex, a coactivator involved in the regulated transcription of nearly all RNA polymerase II-dependent genes. Mediator functions as a bridge to convey information from gene-specific regulatory proteins to the basal RNA polymerase II transcription machinery. Mediator is recruited to promoters by direct interactions with regulatory proteins and serves as a scaffold for the assembly of a functional preinitiation complex with RNA polymerase II and the general transcription factors. In Aspergillus clavatus (strain ATCC 1007 / CBS 513.65 / DSM 816 / NCTC 3887 / NRRL 1 / QM 1276 / 107), this protein is Mediator of RNA polymerase II transcription subunit 18 (srb5).